The following is an 869-amino-acid chain: MPADTPAGSAPARFDPAQIEPKWRAAWDLAGTFTATPDPAKQKYYVLEMFPYPSGRIHMGHVRNYTMGDVIARYKASCGFSVLHPMGWDAFGMPAENAAMATGGHPKDWTYANIAEMRAQMKPLGLSIDWSREFATCDEAYYGQQQSMFLDFLEKGLVYRKNAVVNWDPVDMTVLANEQVIDGKGWRSGAEVERRELTQWFFKISDFADDLLSALDGLENWPEKVRLMQANWIGKSRGLEFAFARTDGGDPIPVYTTRPDTLMGASFVGISPGHPIAKALAAQRPEVADFLAEVARGGTTEAALETAPKLGFDTGITVRHPLDPNWELPVWIANFILMDYGTGAIFACPAHDQRDLDFCRKYDLPVIDTFFALDDPTPVGDTAFVPPKTEPVRWVEHFAGLDIATGQEAIEATIDFAEAAGWGRGVEQFRLRDWGLSRQRYWGCPIPVVHCDKCGVVPERKENLPIALPYDEDGRPIDFSIPGNPLDRHPSWRDCACPACGAPARRETDTMDTFVDSSWYFARFTAPRAETPTDPAEVGYWMNVDQYIGGVEHAILHLLYSRFFARAMHLCGHLPESAREPFDALFTQGMVTHAIYKTTGTDGRPVYHYPEEVETTEEGAVLKKTGAPVDIVPSAKMSKSKNNVVDPLAIIDAYGADTARWFVMSDSPPERDVEWTASGAEAAFKHLGRVWRLAEDLRRNAEEAATAGSAEEARALARASARAIAEVTAGIEGFAFNKSVAKLYEFTNTIQKSKAPRAEKRAALKTMAQLMSPMTPHLAEEVWSMLGGIGLVAEAPWPEADPALLVEDTVTLPIQINGKRRSELAVPKDMPREEVEKLALADAAVLKALAGGAPRKLIVVPGRIVNVVI.

Positions 51 to 61 (PYPSGRIHMGH) match the 'HIGH' region motif. Positions 636–640 (KMSKS) match the 'KMSKS' region motif. Position 639 (K639) interacts with ATP.

The protein belongs to the class-I aminoacyl-tRNA synthetase family.

It localises to the cytoplasm. The catalysed reaction is tRNA(Leu) + L-leucine + ATP = L-leucyl-tRNA(Leu) + AMP + diphosphate. The protein is Leucine--tRNA ligase of Dinoroseobacter shibae (strain DSM 16493 / NCIMB 14021 / DFL 12).